The following is a 1208-amino-acid chain: E3 ubiquitin-protein ligase DZIP3 (1208 aa).

Basic and acidic residues predominate over residues 10-29; sequence VRHPAVEDQRKEETENKLEK. 2 disordered regions span residues 10–38 and 637–698; these read VRHP…NKQE and GTSI…PHSV. Coiled-coil stretches lie at residues 14–43, 647–676, 792–853, and 904–939; these read AVED…DIPT, ESLK…SKED, IASL…SKLN, and QLKA…KVKQ. The segment covering 637-647 has biased composition (polar residues); the sequence is GTSIPSESSTE. The span at 648–657 shows a compositional bias: basic and acidic residues; that stretch reads SLKDLQEVKS. Residues 658 to 669 show a composition bias toward basic residues; the sequence is KQRKKKKTKNKK. Basic and acidic residues predominate over residues 670–693; sequence NKDSKEDQVPYVVEKEEQLRKEQA. A disordered region spans residues 1088–1145; it reads KSQSQGKSVSNVNCVSPSHSPSQPDAAQPPKPAWRPLTSQGPATWEGASNPDEEEEEE. A compositionally biased stretch (polar residues) spans 1089–1112; sequence SQSQGKSVSNVNCVSPSHSPSQPD. The RING-type; atypical zinc-finger motif lies at 1148–1188; sequence CVICHENLSPENLSVLPCAHKFHAQCIRPWLMQQGTCPTCR.

In terms of assembly, interacts with DAZ proteins. As to expression, widely expressed at low level. Highly expressed in skeletal muscle, kidney and heart. Expressed at low level in placenta, lung, brain, liver and pancreas.

The protein resides in the cytoplasm. It carries out the reaction S-ubiquitinyl-[E2 ubiquitin-conjugating enzyme]-L-cysteine + [acceptor protein]-L-lysine = [E2 ubiquitin-conjugating enzyme]-L-cysteine + N(6)-ubiquitinyl-[acceptor protein]-L-lysine.. It participates in protein modification; protein ubiquitination. Its function is as follows. E3 Ubiquitin ligase proteins mediate ubiquitination and subsequent proteasomal degradation of target proteins. E3 ubiquitin ligases accept ubiquitin from an E2 ubiquitin-conjugating enzyme in the form of a thioester and then directly transfers the ubiquitin to targeted substrates. Able to specifically bind RNA. In Homo sapiens (Human), this protein is E3 ubiquitin-protein ligase DZIP3 (DZIP3).